Reading from the N-terminus, the 125-residue chain is Fluoride-specific ion channel FluC (125 aa).

3 helical membrane-spanning segments follow: residues 36 to 56, 65 to 85, and 99 to 119; these read GTIF…FLSI, FILF…TFAY, and IIYF…GMFL. 2 residues coordinate Na(+): glycine 75 and threonine 78.

This sequence belongs to the fluoride channel Fluc/FEX (TC 1.A.43) family.

The protein resides in the cell inner membrane. The enzyme catalyses fluoride(in) = fluoride(out). With respect to regulation, na(+) is not transported, but it plays an essential structural role and its presence is essential for fluoride channel function. Functionally, fluoride-specific ion channel. Important for reducing fluoride concentration in the cell, thus reducing its toxicity. In Thermosipho africanus (strain TCF52B), this protein is Fluoride-specific ion channel FluC.